The following is a 473-amino-acid chain: H(+)/Cl(-) exchange transporter ClcA (473 aa).

At 1-32 (MKTDTPSLEIPQAARLRRRQLIRQLLERDKTP) the chain is on the cytoplasmic side. Residues 33-69 (LAILFMAAVVGTLVGLAAVAFDKGVSWLQNQRMGALV) form a helical membrane-spanning segment. Residues 70–76 (HTADNYP) are Periplasmic-facing. Residues 77–100 (LLLTVAFLCSAVLAMFGYFLVRKY) traverse the membrane as a helical segment. The short motif at 106-110 (GSGIP) is the Selectivity filter part_1 element. Ser-107 lines the chloride pocket. The helical intramembrane region spans 109–116 (IPEIEGAL). Over 117 to 123 (EDQRPVR) the chain is Cytoplasmic. A run of 2 helical transmembrane segments spans residues 124-141 (WWRVLPVKFFGGLGTLGG) and 148-166 (EGPTVQIGGNIGRMVLDIF). The Selectivity filter part_2 signature appears at 146-150 (GREGP). Over 167–176 (RLKGDEARHT) the chain is Cytoplasmic. 2 intramembrane regions (helical) span residues 177-189 (LLATGAAAGLAAA) and 193-201 (PLAGILFII). The Cytoplasmic segment spans residues 202–214 (EEMRPQFRYTLIS). Residues 215 to 232 (IKAVFIGVIMSTIMYRIF) traverse the membrane as a helical segment. At 233–252 (NHEVALIDVGKLSDAPLNTL) the chain is on the periplasmic side. The helical transmembrane segment at 253-281 (WLYLILGIIFGIFGPIFNKWVLGMQDLLH) threads the bilayer. At 282–287 (RVHGGN) the chain is on the cytoplasmic side. A helical membrane pass occupies residues 288 to 309 (ITKWVIMGGAIGGLCGLLGFVA). The Periplasmic segment spans residues 310–329 (PATSGGGFNLIPIATAGNFS). Transmembrane regions (helical) follow at residues 330-349 (MGMLVFIFVARVITTLLCFS) and 355-376 (GIFAPMLALGTVLGTAFGMVAV). Residues 355–359 (GIFAP) carry the Selectivity filter part_3 motif. Chloride contacts are provided by Ile-356 and Phe-357. The Periplasmic portion of the chain corresponds to 377 to 386 (ELFPQYHLEA). An intramembrane region (helical) is located at residues 387-401 (GTFAIAGMGALLAAS). An intramembrane region (note=Loop between two helices) is located at residues 402–404 (IRA). The helical intramembrane region spans 405 to 416 (PLTGIILVLEMT). An intramembrane region (note=Loop between two helices) is located at residues 417 to 421 (DNYQL). A helical membrane pass occupies residues 422–438 (ILPMIITGLGATLLAQF). The Cytoplasmic portion of the chain corresponds to 439–473 (TGGKPLYSAILARTLAKQEAEQLARSKAASASENT). Position 445 (Tyr-445) interacts with chloride.

It belongs to the chloride channel (TC 2.A.49) family. ClcA subfamily. Homodimer.

Its subcellular location is the cell inner membrane. The catalysed reaction is 2 chloride(in) + H(+)(out) = 2 chloride(out) + H(+)(in). Proton-coupled chloride transporter. Functions as antiport system and exchanges two chloride ions for 1 proton. Probably acts as an electrical shunt for an outwardly-directed proton pump that is linked to amino acid decarboxylation, as part of the extreme acid resistance (XAR) response. The polypeptide is H(+)/Cl(-) exchange transporter ClcA (Escherichia fergusonii (strain ATCC 35469 / DSM 13698 / CCUG 18766 / IAM 14443 / JCM 21226 / LMG 7866 / NBRC 102419 / NCTC 12128 / CDC 0568-73)).